A 505-amino-acid polypeptide reads, in one-letter code: Protein ERGIC-53-like (505 aa).

The signal sequence occupies residues 1–25 (MLEIRGLSPSLCLLSLLLVLHGAER). The Lumenal portion of the chain corresponds to 26–438 (SQPPPRRRFE…SGWLLGSSTC (413 aa)). Residues 32-254 (RRFEYKLSFK…DVLSFLTFSL (223 aa)) enclose the L-type lectin-like domain. N-linked (GlcNAc...) asparagine glycosylation is present at Asn84. Cys177 and Cys216 are disulfide-bonded. Residues 439-459 (LHTSIFLFFLLLQTVGFFCYV) traverse the membrane as a helical segment. Topologically, residues 460–505 (NFSRQELDKRLQEYLSTGSLSLEPALPITRTIGVLRRQPISPSMQA) are cytoplasmic.

The protein resides in the endoplasmic reticulum-Golgi intermediate compartment membrane. This Mus musculus (Mouse) protein is Protein ERGIC-53-like (Lman1l).